A 393-amino-acid chain; its full sequence is METFLFTSESVNEGHPDKLCDQISDAVLDACLQQDPDSKVACETCTKTNMVMVFGEITTKANVDYEKIVRDTCREIGFVSDDVGLDADNCKVLVNIEQQSPDIAQGVHGHLTKRPEEIGAGDQGHMFGYATDETPELMPLSHVLATKLGARLTEVRKNGTCPWLRPDGKTQVTVEYHNDGGARVPIRVHTVLISTQHDETVTNDEIAADLKEHVIKPVIPEKYLDEKTIFHLNPSGRFVIGGPHGDAGLTGRKIIIDTYGGWGAHGGGAFSGKDPTKVDRSGAYIVRQAAKSIVANGLARRCIVQVSYAIGVPEPLSVFVDTYGTGKIPDREILKIVKENFDFRPGMISINLDLKRGGNGRFLKTAAYGHFGRDDPDFTWEVVKPLKWEKTQA.

Glu-9 is a Mg(2+) binding site. His-15 is an ATP binding site. Residue Glu-43 coordinates K(+). L-methionine contacts are provided by Glu-56 and Gln-99. ATP-binding positions include 167 to 169 (DGK), 235 to 238 (SGRF), Asp-246, 252 to 253 (RK), Ala-269, Lys-273, and Lys-277. Asp-246 serves as a coordination point for L-methionine. An L-methionine-binding site is contributed by Lys-277.

Belongs to the AdoMet synthase family. In terms of assembly, homotetramer. The cofactor is Mn(2+). Mg(2+) serves as cofactor. It depends on Co(2+) as a cofactor. Requires K(+) as cofactor.

The protein resides in the cytoplasm. The catalysed reaction is L-methionine + ATP + H2O = S-adenosyl-L-methionine + phosphate + diphosphate. The protein operates within amino-acid biosynthesis; S-adenosyl-L-methionine biosynthesis; S-adenosyl-L-methionine from L-methionine: step 1/1. Its function is as follows. Catalyzes the formation of S-adenosylmethionine from methionine and ATP. The reaction comprises two steps that are both catalyzed by the same enzyme: formation of S-adenosylmethionine (AdoMet) and triphosphate, and subsequent hydrolysis of the triphosphate. The sequence is that of S-adenosylmethionine synthase 2 (METK2) from Vitis vinifera (Grape).